A 228-amino-acid polypeptide reads, in one-letter code: Leucokinins (228 aa).

Positions 1 to 18 are cleaved as a signal peptide; the sequence is MAMLLQVALPLLAAVSWG. Residues 19–164 constitute a propeptide that is removed on maturation; that stretch reads WELNENDDSL…PRFSPVSAIQ (146 aa). The segment at 80 to 118 is disordered; the sequence is EFSENNEAEDKSPTSAQNTQEHIPGNNFPPPAASNPPVN. Glycine amide is present on residues glycine 180 and glycine 193. Residues 197–209 constitute a propeptide that is removed on maturation; it reads NTGRVHRQPKVVI. Glycine 217 bears the Glycine amide mark. A propeptide spanning residues 221–228 is cleaved from the precursor; sequence NQKDDNVF.

It localises to the secreted. In terms of biological role, stimulates both fluid secretion by the Malpighian tubules and hindgut contractions. Depolarize the transepithelial voltage of the Malpighian tubules in concentrations of less than 10(-9) M and increase the frequency of hindgut contractions at concentrations above 10(-8) M. This is Leucokinins from Aedes aegypti (Yellowfever mosquito).